Consider the following 32-residue polypeptide: Small ribosomal subunit protein uS19 (32 aa).

This sequence belongs to the universal ribosomal protein uS19 family.

Functionally, protein S19 forms a complex with S13 that binds strongly to the 16S ribosomal RNA. The chain is Small ribosomal subunit protein uS19 (rpsS) from Yersinia enterocolitica.